The chain runs to 416 residues: Tyrosine--tRNA ligase (416 aa).

Tyrosine 34 serves as a coordination point for L-tyrosine. The 'HIGH' region signature appears at 39 to 48; it reads PTGDSLHIGH. Positions 165 and 169 each coordinate L-tyrosine. The 'KMSKS' region signature appears at 227–231; it reads KFGKT. Lysine 230 provides a ligand contact to ATP. The region spanning 349–416 is the S4 RNA-binding domain; it reads ENIIIWLTDN…KKHYYLARVK (68 aa).

It belongs to the class-I aminoacyl-tRNA synthetase family. TyrS type 1 subfamily. As to quaternary structure, homodimer.

It is found in the cytoplasm. The enzyme catalyses tRNA(Tyr) + L-tyrosine + ATP = L-tyrosyl-tRNA(Tyr) + AMP + diphosphate + H(+). In terms of biological role, catalyzes the attachment of tyrosine to tRNA(Tyr) in a two-step reaction: tyrosine is first activated by ATP to form Tyr-AMP and then transferred to the acceptor end of tRNA(Tyr). The sequence is that of Tyrosine--tRNA ligase from Limosilactobacillus reuteri (strain DSM 20016) (Lactobacillus reuteri).